The following is a 527-amino-acid chain: MPMDFQPTSSHSNWVVQKFGGTSVGKFPVQIVDDIVKHYSKPDGPNNNVAVVCSARSSYTKAEGTTSRLLKCCDLASQESEFQDIIEVIRQDHIDNADRFILNPALQAKLVDDTNKELELVKKYLNASKVLGEVSSRTVDLVMSCGEKLSCLFMTALCNDRGCKAKYVDLSHIVPSDFSASALDNSFYTFLVQALKEKLAPFVSAKERIVPVFTGFFGLVPTGLLNGVGRGYTDLCAALIAVAVNADELQVWKEVDGIFTADPRKVPEARLLDSVTPEEASELTYYGSEVIHPFTMEQVIRAKIPIRIKNVQNPLGNGTIIYPDNVAKKGESTPPHPPENLSSSFYEKRKRGATAITTKNDIFVINIHSNKKTLSHGFLAQIFTILDKYKLVVDLISTSEVHVSMALPIPDADSLKSLRQAEEKLRILGSVDITKKLSIVSLVGKHMKQYIGIAGTMFTTLAEEGINIEMISQGANEINISCVINESDSIKALQCIHAKLLSERTNTSNQFEHAIDERLEQLKRLGI.

Position 333 is a phosphothreonine (Thr-333). The region spanning Leu-442 to Ile-527 is the ACT domain.

It belongs to the aspartokinase family. Homohexamer. Interacts with FPR1; the interaction is direct, plays a role in feedback inhibition of aspartokinase by threonine, and inhibited by tacrolimus and sirolimus.

The catalysed reaction is L-aspartate + ATP = 4-phospho-L-aspartate + ADP. Its pathway is amino-acid biosynthesis; L-methionine biosynthesis via de novo pathway; L-homoserine from L-aspartate: step 1/3. It participates in amino-acid biosynthesis; L-threonine biosynthesis; L-threonine from L-aspartate: step 1/5. With respect to regulation, allosterically inhibited by threonine. Its function is as follows. Phosphorylates aspartate, the first step in the biosynthesis of amino acids that derive from aspartate (the aspartate family of amino acids), including methioinine and threonine, the latter of which is a precursor to isoleucine. The chain is Aspartokinase (HOM3) from Saccharomyces cerevisiae (strain ATCC 204508 / S288c) (Baker's yeast).